The sequence spans 281 residues: Large ribosomal subunit protein uL2 (281 aa).

Residues 222 to 281 (TVRGSAMNPNDHPHGGGEGRQPIGRKSPMTPWGKRALGVKTRATKKASNQFIIRRRKETK) are disordered.

Belongs to the universal ribosomal protein uL2 family. Part of the 50S ribosomal subunit. Forms a bridge to the 30S subunit in the 70S ribosome.

Its function is as follows. One of the primary rRNA binding proteins. Required for association of the 30S and 50S subunits to form the 70S ribosome, for tRNA binding and peptide bond formation. It has been suggested to have peptidyltransferase activity; this is somewhat controversial. Makes several contacts with the 16S rRNA in the 70S ribosome. This chain is Large ribosomal subunit protein uL2, found in Metamycoplasma hominis (strain ATCC 23114 / DSM 25592 / NBRC 14850 / NCTC 10111 / PG21) (Mycoplasma hominis).